The following is a 275-amino-acid chain: Hemin import ATP-binding protein HmuV (275 aa).

In terms of domain architecture, ABC transporter spans leucine 2–glutamine 242. Glycine 34–serine 41 serves as a coordination point for ATP.

It belongs to the ABC transporter superfamily. Heme (hemin) importer (TC 3.A.1.14.5) family. As to quaternary structure, the complex is composed of two ATP-binding proteins (HmuV), two transmembrane proteins (HmuU) and a solute-binding protein (HmuT).

It localises to the cell inner membrane. Functionally, part of the ABC transporter complex HmuTUV involved in hemin import. Responsible for energy coupling to the transport system. This is Hemin import ATP-binding protein HmuV from Gloeobacter violaceus (strain ATCC 29082 / PCC 7421).